The sequence spans 635 residues: Threonine--tRNA ligase (635 aa).

Residues 1-58 (MIHVTCNQEAFELPEGASAMDLANKMKQSHCFVGALINDQEKDLSTTLQDGDTVLFLT) form the TGS domain. Residues 237–528 (DHRVLGTKLD…LIEHFKGRFP (292 aa)) are catalytic. Residues Cys328, His379, and His505 each contribute to the Zn(2+) site.

The protein belongs to the class-II aminoacyl-tRNA synthetase family. Homodimer. Zn(2+) serves as cofactor.

It is found in the cytoplasm. It catalyses the reaction tRNA(Thr) + L-threonine + ATP = L-threonyl-tRNA(Thr) + AMP + diphosphate + H(+). Catalyzes the attachment of threonine to tRNA(Thr) in a two-step reaction: L-threonine is first activated by ATP to form Thr-AMP and then transferred to the acceptor end of tRNA(Thr). Also edits incorrectly charged L-seryl-tRNA(Thr). This Chlamydia trachomatis serovar L2b (strain UCH-1/proctitis) protein is Threonine--tRNA ligase.